Reading from the N-terminus, the 36-residue chain is Pancreatic polypeptide (36 aa).

At Y36 the chain carries Tyrosine amide.

This sequence belongs to the NPY family.

It is found in the secreted. Functionally, hormone secreted by pancreatic cells that acts as a regulator of pancreatic and gastrointestinal functions. The protein is Pancreatic polypeptide (PPY) of Anser anser anser (Western greylag goose).